A 305-amino-acid polypeptide reads, in one-letter code: MRLVVVAGPTASGKTALAIALARRLGGEIVNADSQQVYRGLDVGTAKPTAEERAAAPHHLLDLVEPGEGMDAARFAALADAAIAGIAARGRVPIVAGGTGLYVRALLHGVVEAPGRDPALRAALEEEAARLGRPAVHARLAAVDPAAAALIRPNDLVRVVRALEIAAGGRTPSELYRAHAFREDRYDAALLALDPPRAELHARIDARVRAMFAGGLLDEARALEARFDGALPARLPIGYAEAAAHLRGELDLEEAIRRVQVAHRRYARRQVIWLRKERGVAWIAPPHDVEALARRVLEPRPPAIR.

An ATP-binding site is contributed by 8-15 (GPTASGKT). 10–15 (TASGKT) contributes to the substrate binding site. The tract at residues 33 to 36 (DSQQ) is interaction with substrate tRNA.

This sequence belongs to the IPP transferase family. In terms of assembly, monomer. The cofactor is Mg(2+).

It carries out the reaction adenosine(37) in tRNA + dimethylallyl diphosphate = N(6)-dimethylallyladenosine(37) in tRNA + diphosphate. Catalyzes the transfer of a dimethylallyl group onto the adenine at position 37 in tRNAs that read codons beginning with uridine, leading to the formation of N6-(dimethylallyl)adenosine (i(6)A). This chain is tRNA dimethylallyltransferase, found in Anaeromyxobacter sp. (strain K).